The primary structure comprises 1230 residues: Potassium channel subfamily T member 1 (1230 aa).

The segment at 1–37 is disordered; it reads MARAKLPRSPSEGKAGPGGAPAGAAAPEEPHGLSPLL. Topologically, residues 1–93 are cytoplasmic; the sequence is MARAKLPRSP…LFFIKNQRSS (93 aa). Residues 94–126 form a helical membrane-spanning segment; that stretch reads LRIRLFNFSLKLLTCLLYIVRVLLDDPALGIGC. Residues 127–153 are Extracellular-facing; sequence WGCPKQNYSFNDSSSEINWAPILWVER. N-linked (GlcNAc...) asparagine glycosylation is found at Asn133 and Asn137. Residues 154–178 form a helical membrane-spanning segment; the sequence is KMTLWAIQVIVAIISFLETMLLIYL. Residues 179–192 are Cytoplasmic-facing; that stretch reads SYKGNIWEQIFRVS. The chain crosses the membrane as a helical span at residues 193 to 208; sequence FVLEMINTLPFIITIF. Residues 209 to 215 are Extracellular-facing; the sequence is WPPLRNL. A helical membrane pass occupies residues 216–233; that stretch reads FIPVFLNCWLAKHALENM. Residues 234–246 are Cytoplasmic-facing; that stretch reads INDFHRAILRTQS. The chain crosses the membrane as a helical span at residues 247 to 274; sequence AMFNQVLILFCTLLCLVFTGTCGIQHLE. Over 275–281 the chain is Extracellular; that stretch reads RAGENLS. An intramembrane region (pore-forming) is located at residues 282 to 302; it reads LLTSFYFCIVTFSTVGYGDVT. K(+)-binding residues include Val296 and Gly297. At 303-304 the chain is on the extracellular side; it reads PK. Residues 305-338 form a helical membrane-spanning segment; the sequence is IWPSQLLVVIMICVALVVLPLQFEELVYLWMERQ. Residues 339-1230 are Cytoplasmic-facing; the sequence is KSGGNYSRHR…NPETRDETQL (892 aa). One can recognise an RCK N-terminal 1 domain in the interval 352 to 488; it reads EKHVVLCVSS…FHVKFADHVV (137 aa). The Na(+) site is built by Leu513, His516, Ser538, and Asn540. Residues 660-689 are disordered; that stretch reads TEHRPTQSGGGGGGSKLALPTENGSGSRRP. Cys758 and Cys759 together coordinate Zn(2+). 2 residues coordinate K(+): Arg761 and Lys764. Residues Arg761 and Lys764 each contribute to the Na(+) site. Cys766 and His768 together coordinate Zn(2+). Positions 769, 771, 777, and 778 each coordinate K(+). Residue Tyr771 coordinates Na(+). Residue Phe779 participates in Na(+) binding. The RCK N-terminal 2 domain maps to 781–921; sequence NKLIIVSAET…QFRAKDSYSL (141 aa). K(+) contacts are provided by Ser787, Leu818, Asp820, Gly842, and Asp865. 2 disordered regions span residues 1048 to 1078 and 1204 to 1230; these read EVKG…EHPL and SSSQ…ETQL. Residues 1057–1072 are compositionally biased toward gly residues; sequence AGTGGSSQGRHTGGGD. Residues 1204 to 1219 show a composition bias toward low complexity; the sequence is SSSQSRKSSCSHKLSS.

Belongs to the potassium channel family. Calcium-activated (TC 1.A.1.3) subfamily. KCa4.1/KCNT1 sub-subfamily. Homotetramer; which constitutes the Na(+)-activated K(+) channel. Interacts with KCNT2; these heterodimer channels differ from the homomers in their unitary conductance, kinetic behavior, subcellular localization, and response to activation of protein kinase C. Interacts (via C-terminus) with FMR1; this interaction alters gating properties of KCNT1. Interacts with CRBN via its cytoplasmic C-terminus. Post-translationally, phosphorylated by protein kinase C. Phosphorylation of the C-terminal domain increases channel activity. Highest expression in liver, brain and spinal cord. Lowest expression in skeletal muscle.

The protein localises to the cell membrane. The catalysed reaction is K(+)(in) = K(+)(out). With respect to regulation, activated by high intracellular Na(+). In addition to activation by Na(+), is cooperatively activated by intracellular Cl(-) levels. Inhibited by Zn(2+). Activated upon stimulation of G-protein coupled receptors, such as CHRM1 and GRIA1. Functionally, sodium-activated K(+) channel. Acts as an important mediator of neuronal membrane excitability. Contributes to the delayed outward currents. Regulates neuronal bursting in sensory neurons. Contributes to synaptic development and plasticity. The sequence is that of Potassium channel subfamily T member 1 from Homo sapiens (Human).